The sequence spans 701 residues: Polyribonucleotide nucleotidyltransferase (701 aa).

Positions 487 and 493 each coordinate Mg(2+). The KH domain maps to proline 554–valine 613. The S1 motif domain maps to glycine 623–lysine 691.

Belongs to the polyribonucleotide nucleotidyltransferase family. In terms of assembly, component of the RNA degradosome, which is a multiprotein complex involved in RNA processing and mRNA degradation. Requires Mg(2+) as cofactor.

Its subcellular location is the cytoplasm. The enzyme catalyses RNA(n+1) + phosphate = RNA(n) + a ribonucleoside 5'-diphosphate. Involved in mRNA degradation. Catalyzes the phosphorolysis of single-stranded polyribonucleotides processively in the 3'- to 5'-direction. The polypeptide is Polyribonucleotide nucleotidyltransferase (Pseudomonas syringae pv. tomato (strain ATCC BAA-871 / DC3000)).